Reading from the N-terminus, the 86-residue chain is Neurotoxin 3FTx-8a (86 aa).

The N-terminal stretch at 1-21 is a signal peptide; sequence MKTLLLTLVVVTIVCLDLGYT. Disulfide bonds link Cys24-Cys45, Cys27-Cys32, Cys38-Cys63, Cys67-Cys78, and Cys79-Cys84.

Expressed by the venom gland.

It localises to the secreted. Binds with low affinity to muscular (alpha-1-beta-1-delta-epsilon/CHRNA1-CHRNB1-CHRND-CHRNE) and very low affinity to neuronal (alpha-7/CHRNA7) nicotinic acetylcholine receptor (nAChR). This Bungarus fasciatus (Banded krait) protein is Neurotoxin 3FTx-8a.